The following is a 298-amino-acid chain: MTLHLGSHVSMNGKKMLLGSSEEAISYGANTFMVYTGAPQNTRRKPIEELNIEAGRAHMKENGIDHIIVHAPYIINIGNSEKPATFKLGVDFLQSEIERTQALGADQIVLHPGAHVGAGVDKGIEKIIEGLNEVLTENDGVQIALETMAGKGSECGRTFEEIARIINGVTHNDRLSVCFDTCHTHDAGYNIVEDFDGVLNEFDKIIGVERIKVLHINDSKNPRGAAKDRHENIGFGHIGFKALHYIVHHPQLQDIPKILETPYVGEDKKNKKPPYKFEIDMIRNGTFHEGLLEKIVAQ.

Zn(2+) contacts are provided by H70, H111, E146, D180, H183, H215, D228, H230, and E260.

The protein belongs to the AP endonuclease 2 family. Requires Zn(2+) as cofactor.

It catalyses the reaction Endonucleolytic cleavage to 5'-phosphooligonucleotide end-products.. In terms of biological role, endonuclease IV plays a role in DNA repair. It cleaves phosphodiester bonds at apurinic or apyrimidinic (AP) sites, generating a 3'-hydroxyl group and a 5'-terminal sugar phosphate. This Halalkalibacterium halodurans (strain ATCC BAA-125 / DSM 18197 / FERM 7344 / JCM 9153 / C-125) (Bacillus halodurans) protein is Probable endonuclease 4.